The primary structure comprises 343 residues: Anthranilate phosphoribosyltransferase (343 aa).

Residues Gly-84, 87–88 (GD), Thr-92, 94–97 (NIST), 112–120 (KHGNRGVSS), and Ser-124 each bind 5-phospho-alpha-D-ribose 1-diphosphate. Gly-84 is a binding site for anthranilate. Ser-96 serves as a coordination point for Mg(2+). An anthranilate-binding site is contributed by Asn-115. Arg-170 contacts anthranilate. Positions 229 and 230 each coordinate Mg(2+).

This sequence belongs to the anthranilate phosphoribosyltransferase family. In terms of assembly, homodimer. Mg(2+) serves as cofactor.

It catalyses the reaction N-(5-phospho-beta-D-ribosyl)anthranilate + diphosphate = 5-phospho-alpha-D-ribose 1-diphosphate + anthranilate. Its pathway is amino-acid biosynthesis; L-tryptophan biosynthesis; L-tryptophan from chorismate: step 2/5. Its function is as follows. Catalyzes the transfer of the phosphoribosyl group of 5-phosphorylribose-1-pyrophosphate (PRPP) to anthranilate to yield N-(5'-phosphoribosyl)-anthranilate (PRA). This chain is Anthranilate phosphoribosyltransferase, found in Burkholderia vietnamiensis (strain G4 / LMG 22486) (Burkholderia cepacia (strain R1808)).